The following is a 139-amino-acid chain: Putative pre-16S rRNA nuclease (139 aa).

Belongs to the YqgF nuclease family.

The protein resides in the cytoplasm. Could be a nuclease involved in processing of the 5'-end of pre-16S rRNA. This is Putative pre-16S rRNA nuclease from Proteus mirabilis (strain HI4320).